Reading from the N-terminus, the 181-residue chain is Adenine phosphoribosyltransferase (181 aa).

It belongs to the purine/pyrimidine phosphoribosyltransferase family. As to quaternary structure, homodimer.

The protein localises to the cytoplasm. The enzyme catalyses AMP + diphosphate = 5-phospho-alpha-D-ribose 1-diphosphate + adenine. Its pathway is purine metabolism; AMP biosynthesis via salvage pathway; AMP from adenine: step 1/1. In terms of biological role, catalyzes a salvage reaction resulting in the formation of AMP, that is energically less costly than de novo synthesis. The polypeptide is Adenine phosphoribosyltransferase (Vibrio vulnificus (strain CMCP6)).